Reading from the N-terminus, the 173-residue chain is Crossover junction endodeoxyribonuclease RuvC (173 aa).

Active-site residues include Asp8, Glu67, and Asp139. Mg(2+) is bound by residues Asp8, Glu67, and Asp139.

This sequence belongs to the RuvC family. Homodimer which binds Holliday junction (HJ) DNA. The HJ becomes 2-fold symmetrical on binding to RuvC with unstacked arms; it has a different conformation from HJ DNA in complex with RuvA. In the full resolvosome a probable DNA-RuvA(4)-RuvB(12)-RuvC(2) complex forms which resolves the HJ. The cofactor is Mg(2+).

The protein resides in the cytoplasm. The enzyme catalyses Endonucleolytic cleavage at a junction such as a reciprocal single-stranded crossover between two homologous DNA duplexes (Holliday junction).. In terms of biological role, the RuvA-RuvB-RuvC complex processes Holliday junction (HJ) DNA during genetic recombination and DNA repair. Endonuclease that resolves HJ intermediates. Cleaves cruciform DNA by making single-stranded nicks across the HJ at symmetrical positions within the homologous arms, yielding a 5'-phosphate and a 3'-hydroxyl group; requires a central core of homology in the junction. The consensus cleavage sequence is 5'-(A/T)TT(C/G)-3'. Cleavage occurs on the 3'-side of the TT dinucleotide at the point of strand exchange. HJ branch migration catalyzed by RuvA-RuvB allows RuvC to scan DNA until it finds its consensus sequence, where it cleaves and resolves the cruciform DNA. This is Crossover junction endodeoxyribonuclease RuvC from Edwardsiella ictaluri (strain 93-146).